A 633-amino-acid chain; its full sequence is CDK5 and ABL1 enzyme substrate 1 (633 aa).

Residues 1-29 (MAAAAAAATTAACSSGSAGTDAAGASGLQ) are compositionally biased toward low complexity. Residues 1 to 99 (MAAAAAAATT…EGGAAKPGAG (99 aa)) are disordered. The interval 1-109 (MAAAAAAATT…GACGARTRFS (109 aa)) is interaction with TDRD7. The segment covering 51 to 61 (PPRKPRMDPRR) has biased composition (basic and acidic residues). 2 positions are modified to phosphoserine: S168 and S287. The tract at residues 179–492 (QWQPPRPAPL…TTVIDYVKPS (314 aa)) is interaction with CDK3. S313 carries the post-translational modification Phosphoserine; by CDK2 and CDK3. Phosphothreonine is present on T415.

Belongs to the cyclin family. As to quaternary structure, found in a complex with p53/TP53. Found in a number of complexes with CDK2, CDK3, CDK5, ABL1, TDRD7, CDK17, CCNA1, CCNE1 and TP73. Interacts with CDK2, CDK3, CDK5, ABL1 and TDRD7. Post-translationally, phosphorylated on Ser-313 by CCNE1/CDK3. Phosphorylated on serine/threonine residues by CDK5 and on tyrosine residues by ABL1. Also phosphorylated in vitro by CCNA1/CDK2, CCNE1/CDK2, CCNA1/CDK3 and CCNE1/CDK3. In terms of tissue distribution, expressed in breast, pancreas, colon, head and neck (at protein level). Strongly decreased in more than half of cases of atypical endometrial hyperplasia and in more than 90% of endometrial cancers.

It is found in the nucleus. It localises to the cytoplasm. Cyclin-dependent kinase binding protein. Enhances cyclin-dependent kinase tyrosine phosphorylation by nonreceptor tyrosine kinases, such as that of CDK5 by activated ABL1, which leads to increased CDK5 activity and is critical for neuronal development, and that of CDK2 by WEE1, which leads to decreased CDK2 activity and growth inhibition. Positively affects neuronal outgrowth. Plays a role as a regulator for p53/p73-induced cell death. The chain is CDK5 and ABL1 enzyme substrate 1 (CABLES1) from Homo sapiens (Human).